Reading from the N-terminus, the 396-residue chain is B2 bradykinin receptor (396 aa).

Residues 1–65 (MDTRSSLCPK…EWWSWLNAIQ (65 aa)) are Extracellular-facing. 2 N-linked (GlcNAc...) asparagine glycosylation sites follow: N33 and N44. A helical membrane pass occupies residues 66-89 (APFLWVLFLLAALENIFVLSVFCL). Over 90-98 (HKTNCTVAE) the chain is Cytoplasmic. The helical transmembrane segment at 99-123 (IYLGNLAAADLILACGLPFWAITIA) threads the bilayer. Residues 124-136 (NNFDWLFGEVLCR) lie on the Extracellular side of the membrane. C135 and C216 form a disulfide bridge. Residues 137–158 (VVNTMIYMNLYSSICFLMLVSI) form a helical membrane-spanning segment. The Cytoplasmic segment spans residues 159-180 (DRYLALVKTMSMGRMRGVRWAK). Position 161 is a phosphotyrosine (Y161). A helical transmembrane segment spans residues 181 to 203 (LYSLVIWSCTLLLSSPMLVFRTM). The Extracellular segment spans residues 204 to 226 (KDYREEGHNVTACVIVYPSRSWE). N-linked (GlcNAc...) asparagine glycosylation occurs at N212. A helical membrane pass occupies residues 227 to 253 (VFTNMLLNLVGFLLPLSIITFCTVRIM). Residues 254 to 272 (QVLRNNEMKKFKEVQTEKK) lie on the Cytoplasmic side of the membrane. The chain crosses the membrane as a helical span at residues 273 to 297 (ATVLVLAVLGLFVLCWFPFQISTFL). At 298–316 (DTLLRLGVLSGCWNERAVD) the chain is on the extracellular side. A helical transmembrane segment spans residues 317–340 (IVTQISSYVAYSNSCLNPLVYVIV). Topologically, residues 341–396 (GKRFRKKSREVYQAICRKGGCMGESVQMENSMGTLRTSISVDRQIHKLQDWAGNKQ) are cytoplasmic. Y352 is subject to Phosphotyrosine. C356 carries S-palmitoyl cysteine lipidation. Phosphoserine is present on residues S365 and S371. Residue T374 is modified to Phosphothreonine. A phosphoserine; by GRK6 mark is found at S378 and S380.

Belongs to the G-protein coupled receptor 1 family. Bradykinin receptor subfamily. BDKRB2 sub-subfamily. As to quaternary structure, forms a complex with PECAM1 and GNAQ. Interacts with PECAM1. In terms of processing, diphosphorylation at Ser-365 and Ser-371, at Ser-378 and Ser-380, and at Thr-374 and Ser-380 seem to be correlated pairwise. Post-translationally, palmitoylation at Cys-356 and phosphorylation at Tyr-352 seem to be mutually exclusive. In terms of tissue distribution, uterus, vas deferens, kidney, ileum, heart, testis, lung and brain.

The protein resides in the cell membrane. Functionally, receptor for bradykinin. It is associated with G proteins that activate a phosphatidylinositol-calcium second messenger system. The sequence is that of B2 bradykinin receptor (Bdkrb2) from Rattus norvegicus (Rat).